The primary structure comprises 104 residues: Cytochrome c-552 (104 aa).

An N-terminal signal peptide occupies residues 1-23 (MHLHLRGICLVLAVASSSSSALA). C37, C40, H41, and M82 together coordinate heme c.

The protein belongs to the cytochrome c family. Monoheme monomer. Has the tendency to dimerize. Binds 1 heme c group covalently per subunit.

Its subcellular location is the periplasm. This Bradyrhizobium diazoefficiens (strain JCM 10833 / BCRC 13528 / IAM 13628 / NBRC 14792 / USDA 110) protein is Cytochrome c-552 (cycB).